Here is a 374-residue protein sequence, read N- to C-terminus: Trichodiene synthase (374 aa).

Mg(2+) is bound by residues Asp100, Glu164, Asn225, Ser229, Glu233, Asp239, and Ile241. Positions Asp100–Asp104 are aspartate-rich domain.

The protein belongs to the trichodiene synthase family. Mg(2+) is required as a cofactor. It depends on Mn(2+) as a cofactor.

The catalysed reaction is (2E,6E)-farnesyl diphosphate = trichodiene + diphosphate. Its pathway is sesquiterpene biosynthesis; trichothecene biosynthesis. With respect to regulation, benzyl triethylammonium cation (BTAC) acts as a competitive inhibitor of trichodiene synthase reaction in the presence of pyrophosphate (PPi). Functionally, trichodiene synthase; part of the core gene cluster that mediates the biosynthesis of trichothecenes, a very large family of chemically related bicyclic sesquiterpene compounds acting as mycotoxins, including T2-toxin. The biosynthesis of trichothecenes begins with the cyclization of farnesyl diphosphate to trichodiene and is catalyzed by the trichodiene synthase TRI5. Trichodiene undergoes a series of oxygenations catalyzed by the cytochrome P450 monooxygenase TRI4. TRI4 controls the addition of four oxygens at C-2, C-3, C-11, and the C-12, C-13-epoxide to form the intermediate isotrichotriol. Isotrichotriol then undergoes a non-enzymatic isomerization and cyclization to form isotrichodermol. During this process, the oxygen at the C-2 position becomes the pyran ring oxygen and the hydroxyl group at C-11 is lost. More complex type A trichothecenes are built by modifying isotrichodermol through a series of paired hydroxylation and acetylation or acylation steps. Isotrichodermol is converted to isotrichodermin by the acetyltransferase TRI101. TRI101 encodes a C-3 transacetylase that acts as a self-protection or resistance factor during biosynthesis and that the presence of a free C-3 hydroxyl group is a key component of Fusarium trichothecene phytotoxicity. A second hydroxyl group is added to C-15 by the trichothecene C-15 hydroxylase TRI11, producing 15-decalonectrin, which is then acetylated by TRI3, producing calonectrin. A third hydroxyl group is added at C-4 by the cytochrome P450 monooxygenase TRI13, converting calonectrin to 3,15-diacetoxyspirpenol, which is subsequently acetylated by the acetyltransferase TRI7. A fourth hydroxyl group is added to C-8 by the cytochrome P450 monooxygenase TRI1, followed by the addition of an isovaleryl moiety by TRI16. Finally, the acetyl group is removed from the C-3 position by the trichothecene C-3 esterase TRI8 to produce T-2 toxin. The protein is Trichodiene synthase of Fusarium sporotrichioides.